Reading from the N-terminus, the 243-residue chain is uncharacterized protein (243 aa).

This is an uncharacterized protein from Orgyia pseudotsugata multicapsid polyhedrosis virus (OpMNPV).